An 825-amino-acid chain; its full sequence is MENTRVFVSGLPPTFTNDQLRMHFSSRFQITDAHVLPKRRIGFVGFKSSEAAQQAASYFNKTYVKMSKISVEIAKPIDSEPVKKAEKHRKGSTSNDSTAGKALKRKRDGDNTQKDPQLQEYLSVIERPSKTKTWANGDDFLNTIQNQPATSELREEQRDDTSEKVEEHSHKQRKKPRVDDVPKAAHDREPEPMVLDKTEEEHERANADGQVEAIPPTQEEAEPVSDADWLRSKTSRLLGLLDEDEQAEFDSTAQRKPDPSSEPETVSKAGAQHSDDDKAAVESSVEEEEVDTNIEHIRLSSRLFVRNLPYDASESDLEPVFSKFGKIEEIHVAFDTRSTTSKGFAYVQYIEPDAAVQAYKELDGKHFQGRLMHILPATAKKTYKIDEHELSKLPLKKQKQIKRKLEASSSTFSWNSLYMNTDAVMSSVAERLGVSKADLLDPTSADAAVKQAHAETHVIQETKAYFTANGVNLDAFKQRERGNTAILVKNFSYGVKVDDLRKLFEPYGQITRLLMPPSGTIAIVEFARPDEAQKAFKGLAYRKVGDSILFLEKAPANLFDATTAPQTSVLETKAVSQGFSTADTFAAEDGDEPVVTSTLFVKNLNFSTTNERFTEVFKPLDGFVSARIKTKPDPKRPGKTLSMGFGFVDFRTKAQAQAALAAMDGYKLDQHELVVRASNKAMDAAEERRREDTAKKIAARRTKIIIKNLPFQATKKDVRSLFGAYGQLRSVRVPKKFDRSARGFGFADFVSAREAENAMDALKNTHLLGRRLVLEFANEEAVDPEQEIEQIEKKVGEQLDRVKLQKLTGTGRKKFTVGAQEDEEA.

Residues 4 to 76 (TRVFVSGLPP…SKISVEIAKP (73 aa)) enclose the RRM 1 domain. The segment at 80 to 289 (EPVKKAEKHR…AVESSVEEEE (210 aa)) is disordered. 2 stretches are compositionally biased toward basic and acidic residues: residues 152 to 169 (ELRE…EEHS) and 177 to 206 (RVDD…ERAN). 4 RRM domains span residues 301 to 379 (SRLF…PATA), 484 to 556 (TAIL…KAPA), 597 to 680 (STLF…ASNK), and 702 to 779 (TKII…FANE).

Belongs to the RRM MRD1 family.

The protein resides in the nucleus. Its function is as follows. Involved in pre-rRNA processing. This chain is Multiple RNA-binding domain-containing protein 1 (mrd1), found in Aspergillus fumigatus (strain ATCC MYA-4609 / CBS 101355 / FGSC A1100 / Af293) (Neosartorya fumigata).